The primary structure comprises 383 residues: Smad nuclear-interacting protein 1 (383 aa).

A compositionally biased stretch (basic and acidic residues) spans 1-10; the sequence is MKAGKSERER. The interval 1-209 is disordered; that stretch reads MKAGKSERER…NRSKEVPVKE (209 aa). The residue at position 18 (Ser18) is a Phosphoserine. A Glycyl lysine isopeptide (Lys-Gly) (interchain with G-Cter in SUMO); alternate cross-link involves residue Lys28. Lys28 is covalently cross-linked (Glycyl lysine isopeptide (Lys-Gly) (interchain with G-Cter in SUMO1); alternate). Lys28 is covalently cross-linked (Glycyl lysine isopeptide (Lys-Gly) (interchain with G-Cter in SUMO2); alternate). Residues 28-43 show a composition bias toward basic and acidic residues; it reads KQERLSPEPVAHRRPD. Residues Ser33, Ser48, and Ser50 each carry the phosphoserine modification. Low complexity predominate over residues 44–56; that stretch reads APAASLSPPAAEP. The segment covering 59 to 90 has biased composition (basic residues); sequence SGHRGSRARSPAKKKSKSSGRRSKSPRTKRSQ. Ser91 carries the phosphoserine modification. Basic and acidic residues-rich tracts occupy residues 99 to 134 and 143 to 159; these read VKQE…ERDR and RSSD…DRDS. Lys100 is covalently cross-linked (Glycyl lysine isopeptide (Lys-Gly) (interchain with G-Cter in SUMO2)). The residue at position 145 (Ser145) is a Phosphoserine. A coiled-coil region spans residues 153–194; it reads QDRDRDSQNLQAQEEERDFHNARRREHRQQNESAGSEAQEVI. Lys210 is covalently cross-linked (Glycyl lysine isopeptide (Lys-Gly) (interchain with G-Cter in SUMO2)). In terms of domain architecture, FHA spans 268–331; the sequence is YLLGRHRRIA…NGTFLNNKRI (64 aa). Positions 359 to 369 are enriched in basic and acidic residues; sequence ESSDTSELDRK. Positions 359–383 are disordered; sequence ESSDTSELDRKEDEDDEEEEMVSDS. Positions 370–383 are enriched in acidic residues; that stretch reads EDEDDEEEEMVSDS. Ser381 bears the Phosphoserine mark.

In terms of assembly, component of activated spliceosome complexes. Binds SMAD4 and CREBBP/EP300. Component of the minor spliceosome, which splices U12-type introns. Binds the SMAD1/OAZ1/PSMB4 complex. Interacts with DROSHA and SMARCA4. Component of the SNARP complex which consists at least of SNIP1, SNW1, THRAP3, BCLAF1 and PNN. In terms of processing, degraded by the proteasome upon binding to the SMAD1/OAZ1/PSMB4 complex.

Its subcellular location is the nucleus. Its function is as follows. Required for pre-mRNA splicing as component of the spliceosome. As a component of the minor spliceosome, involved in the splicing of U12-type introns in pre-mRNAs. Down-regulates NF-kappa-B signaling by competing with RELA for CREBBP/EP300 binding. Involved in the microRNA (miRNA) biogenesis. May be involved in cyclin-D1/CCND1 mRNA stability through the SNARP complex which associates with both the 3'end of the CCND1 gene and its mRNA. The protein is Smad nuclear-interacting protein 1 (Snip1) of Mus musculus (Mouse).